The primary structure comprises 313 residues: Ribosomal RNA small subunit methyltransferase H (313 aa).

Residues 35 to 37, Asp-55, Phe-79, Asp-101, and Gln-108 each bind S-adenosyl-L-methionine; that span reads GGH.

It belongs to the methyltransferase superfamily. RsmH family.

Its subcellular location is the cytoplasm. It carries out the reaction cytidine(1402) in 16S rRNA + S-adenosyl-L-methionine = N(4)-methylcytidine(1402) in 16S rRNA + S-adenosyl-L-homocysteine + H(+). Its function is as follows. Specifically methylates the N4 position of cytidine in position 1402 (C1402) of 16S rRNA. The protein is Ribosomal RNA small subunit methyltransferase H of Salmonella arizonae (strain ATCC BAA-731 / CDC346-86 / RSK2980).